The primary structure comprises 485 residues: Bifunctional protein GlmU (485 aa).

Residues 1-241 are pyrophosphorylase; sequence MSASDFSSAV…ARELAGVNDR (241 aa). Residues 13–16, lysine 27, glutamine 84, and 89–90 contribute to the UDP-N-acetyl-alpha-D-glucosamine site; these read LAAG and GT. Residue aspartate 114 participates in Mg(2+) binding. UDP-N-acetyl-alpha-D-glucosamine is bound by residues glycine 151, glutamate 166, asparagine 181, and asparagine 239. Residue asparagine 239 participates in Mg(2+) binding. Residues 242–262 form a linker region; sequence VQLAEAGAELNRRTVIAAMRG. An N-acetyltransferase region spans residues 263 to 485; that stretch reads GATIVDPATT…AAQNVHNQEG (223 aa). Positions 344 and 362 each coordinate UDP-N-acetyl-alpha-D-glucosamine. Histidine 374 functions as the Proton acceptor in the catalytic mechanism. 2 residues coordinate UDP-N-acetyl-alpha-D-glucosamine: tyrosine 377 and asparagine 388. Acetyl-CoA-binding positions include alanine 391, 397–398, serine 416, and alanine 434; that span reads NY. Residues 465-485 are disordered; that stretch reads RPGTAAAQAAEAAQNVHNQEG. Low complexity predominate over residues 469 to 478; sequence AAAQAAEAAQ.

The protein in the N-terminal section; belongs to the N-acetylglucosamine-1-phosphate uridyltransferase family. In the C-terminal section; belongs to the transferase hexapeptide repeat family. In terms of assembly, homotrimer. Requires Mg(2+) as cofactor.

It localises to the cytoplasm. It carries out the reaction alpha-D-glucosamine 1-phosphate + acetyl-CoA = N-acetyl-alpha-D-glucosamine 1-phosphate + CoA + H(+). The enzyme catalyses N-acetyl-alpha-D-glucosamine 1-phosphate + UTP + H(+) = UDP-N-acetyl-alpha-D-glucosamine + diphosphate. It participates in nucleotide-sugar biosynthesis; UDP-N-acetyl-alpha-D-glucosamine biosynthesis; N-acetyl-alpha-D-glucosamine 1-phosphate from alpha-D-glucosamine 6-phosphate (route II): step 2/2. The protein operates within nucleotide-sugar biosynthesis; UDP-N-acetyl-alpha-D-glucosamine biosynthesis; UDP-N-acetyl-alpha-D-glucosamine from N-acetyl-alpha-D-glucosamine 1-phosphate: step 1/1. Its pathway is bacterial outer membrane biogenesis; LPS lipid A biosynthesis. Its function is as follows. Catalyzes the last two sequential reactions in the de novo biosynthetic pathway for UDP-N-acetylglucosamine (UDP-GlcNAc). The C-terminal domain catalyzes the transfer of acetyl group from acetyl coenzyme A to glucosamine-1-phosphate (GlcN-1-P) to produce N-acetylglucosamine-1-phosphate (GlcNAc-1-P), which is converted into UDP-GlcNAc by the transfer of uridine 5-monophosphate (from uridine 5-triphosphate), a reaction catalyzed by the N-terminal domain. The protein is Bifunctional protein GlmU of Corynebacterium glutamicum (strain ATCC 13032 / DSM 20300 / JCM 1318 / BCRC 11384 / CCUG 27702 / LMG 3730 / NBRC 12168 / NCIMB 10025 / NRRL B-2784 / 534).